The following is a 229-amino-acid chain: Cilia- and flagella-associated protein 95 (229 aa).

The Extracellular segment spans residues Met-1 to Gly-123. Residue Asn-75 is glycosylated (N-linked (GlcNAc...) asparagine). The chain crosses the membrane as a helical span at residues Ile-124–Phe-140. Topologically, residues Pro-141 to Ile-229 are cytoplasmic. The interval Leu-153–Pro-163 is mn.

As to quaternary structure, microtubule inner protein component of sperm flagellar doublet microtubules. Interacts with MYH9. Interacts with MYH10. As to expression, expressed in undifferentiated embryonic stem cells. Expressed in airway epithelial cells.

The protein localises to the cytoplasm. Its subcellular location is the cytoskeleton. It is found in the cilium axoneme. The protein resides in the flagellum axoneme. It localises to the cell membrane. In terms of biological role, microtubule inner protein (MIP) part of the dynein-decorated doublet microtubules (DMTs) in cilia axoneme, which is required for motile cilia beating. The sequence is that of Cilia- and flagella-associated protein 95 from Homo sapiens (Human).